The sequence spans 265 residues: Speedy protein E8 (265 aa).

The segment at 1–80 (MGQILGKIMM…EPEKELAPEP (80 aa)) is disordered. Over residues 66–80 (DESDDEPEKELAPEP) the composition is skewed to acidic residues.

The protein belongs to the Speedy/Ringo family.

The protein is Speedy protein E8 of Homo sapiens (Human).